A 138-amino-acid polypeptide reads, in one-letter code: Putative pre-16S rRNA nuclease (138 aa).

This sequence belongs to the YqgF nuclease family.

The protein resides in the cytoplasm. In terms of biological role, could be a nuclease involved in processing of the 5'-end of pre-16S rRNA. The protein is Putative pre-16S rRNA nuclease of Fusobacterium nucleatum subsp. nucleatum (strain ATCC 25586 / DSM 15643 / BCRC 10681 / CIP 101130 / JCM 8532 / KCTC 2640 / LMG 13131 / VPI 4355).